Reading from the N-terminus, the 1025-residue chain is MNQGYAELHCLSNFSFQRGASSALELFQRAKKHGYQALAITDECTLAGIVRAWQAAKSVELPLIIGSEIRIENGPKLVLLVENIEGYQALCGLITQARRRTQKGQYQILREDFSEPLPGLLVLWVPEAVDEVEEGRWLKQTFGERLWLAVQLHRGQNDQQRLAALLSLADELQIPAVASGDVHMHARGRRALQDTMTAIRHHVPVAEAGLRLHPNGERHLRSLDVLRELYPQTLLDESLKLARRCTFDLGELRYQYPKELVPEEHSASSWLRHLTEQGIAWRWPKGAQPKVLKQIDDELELIAELGYESYFLTVHDVVRFAREQKILCQGRGSAANSAVCFALGITEIDPDRTTLLFERFMSRERNEPPDIDVDFEHERREEVLQYVFRRYGRRRAALTAVVSTYHASGAIRDVAKALGLPPDQINALADCCGHWSDETPPVERLREGGFDPESPLLHRVLSLTGQLIGFPRHLSQHPGGFVISEQPLDTLVPVENAAMADRTIIQWDKDDLDAVGLLKVDILALGMLSAIRRCFDLLRRHRHQDLSLATIPPEDRPTYDMISRADTIGVFQIESRAQMSMLPRLRPQTFYDLVIEVAIVRPGPIQGGMVHPYLRRRNKEEEETYPSPELEVVLKRTLGVPLFQEQVMQIAIVAADYSPGEADQLRRSMAAWKRHGGLEPHKERLAAGMKKNGYSPEFAAQIFEQIKGFGSYGFPESHAASFALLTYASCWLKCHEPAAFACALINSWPMGFYSPDQILQDARRHHLQIRPVDVRASDWDCSLEPIAGEQPAIRMGLRMIKGFREEDARSIEKARARGAFADVADLGERAGLDSRAQALLADAGALRGLAGHRHRARWEVAGVQKQLGLFAGLPSQEEPDVLLPTPSVSEDLFTDYATLGTTLGPHPLTLLRNELRARRCRSSRDLLEVEHGRPVSVAGLVTGRQRPGTASGVTFVTLEDEFGNVNVVVWRDLAERQRQVLVGSQLLKVDGRWEREGEVRHLIAGRLSDLTPLLNGIRVQSRDFH.

Belongs to the DNA polymerase type-C family. DnaE2 subfamily.

It is found in the cytoplasm. The enzyme catalyses DNA(n) + a 2'-deoxyribonucleoside 5'-triphosphate = DNA(n+1) + diphosphate. Its function is as follows. DNA polymerase involved in damage-induced mutagenesis and translesion synthesis (TLS). It is not the major replicative DNA polymerase. The polypeptide is Error-prone DNA polymerase (Pseudomonas fluorescens (strain Pf0-1)).